The primary structure comprises 391 residues: 8-amino-7-oxononanoate synthase (391 aa).

108–109 provides a ligand contact to pyridoxal 5'-phosphate; that stretch reads GF. Position 133 (H133) interacts with substrate. Pyridoxal 5'-phosphate-binding residues include S180, H208, and T236. At K239 the chain carries N6-(pyridoxal phosphate)lysine. T353 provides a ligand contact to substrate.

Belongs to the class-II pyridoxal-phosphate-dependent aminotransferase family. BioF subfamily. In terms of assembly, homodimer. It depends on pyridoxal 5'-phosphate as a cofactor.

The enzyme catalyses 6-carboxyhexanoyl-[ACP] + L-alanine + H(+) = (8S)-8-amino-7-oxononanoate + holo-[ACP] + CO2. The protein operates within cofactor biosynthesis; biotin biosynthesis. Functionally, catalyzes the decarboxylative condensation of pimeloyl-[acyl-carrier protein] and L-alanine to produce 8-amino-7-oxononanoate (AON), [acyl-carrier protein], and carbon dioxide. The polypeptide is 8-amino-7-oxononanoate synthase (Thermosipho melanesiensis (strain DSM 12029 / CIP 104789 / BI429)).